The sequence spans 481 residues: Sestrin-1 (481 aa).

Positions Phe-63 to Gly-244 are N-terminal domain; may mediate the alkylhydroperoxide reductase activity. Cys-122 acts as the Cysteine sulfenic acid (-SOH) intermediate in catalysis. Residues Lys-295–Arg-316 form a disordered region. A C-terminal domain; mediates TORC1 regulation region spans residues Pro-310–Thr-481. L-leucine is bound by residues Thr-375–Thr-378, Thr-387, and Glu-452.

The protein belongs to the sestrin family.

It is found in the nucleus. The protein resides in the cytoplasm. The enzyme catalyses a hydroperoxide + L-cysteinyl-[protein] = S-hydroxy-L-cysteinyl-[protein] + an alcohol. Its function is as follows. May function as an intracellular leucine sensor that negatively regulates the TORC1 signaling pathway through the GATOR complex. In absence of leucine, binds the GATOR subcomplex GATOR2 and prevents TORC1 signaling. Binding of leucine to SESN2 disrupts its interaction with GATOR2 thereby activating the TORC1 signaling pathway. This stress-inducible metabolic regulator may also play a role in protection against oxidative and genotoxic stresses. May prevent the accumulation of reactive oxygen species (ROS) through the alkylhydroperoxide reductase activity born by the N-terminal domain of the protein. The sequence is that of Sestrin-1 from Xenopus laevis (African clawed frog).